We begin with the raw amino-acid sequence, 832 residues long: Mechanosensitive cation channel TMEM63B (832 aa).

At 1 to 40 (MLPFLLATLGTTALNNSNPKDYCYSARIRSTVLQGLPFGG) the chain is on the extracellular side. A helical membrane pass occupies residues 41-65 (VPTVLALDFMCFLALLFLFSILRKV). The S-palmitoyl cysteine moiety is linked to residue Cys-51. The Cytoplasmic portion of the chain corresponds to 66-145 (AWDYGRLALV…KDDEIRDKCG (80 aa)). The Mediates endoplasmic reticulum retention motif lies at 86–88 (RDR). Ser-111, Ser-113, Ser-114, and Ser-115 each carry phosphoserine. Cys-126 carries the S-palmitoyl cysteine lipid modification. A helical membrane pass occupies residues 146-178 (GDAVHYLSFQRHIIGLLVVVGVLSVGIVLPVNF). Residues 179-202 (SGDLLENNAYSFGRTTIANLKSGN) lie on the Extracellular side of the membrane. The helical transmembrane segment at 203 to 227 (NLLWLHTSFAFLYLLLTVYSMRRHT) threads the bilayer. Topologically, residues 228 to 427 (SKMRYKEDDL…IYWEHLSIRG (200 aa)) are cytoplasmic. The tract at residues 231 to 426 (RYKEDDLVKR…NIYWEHLSIR (196 aa)) is intracellular linker IL2; confers mechanosensitivity. S-palmitoyl cysteine attachment occurs at residues Cys-382 and Cys-398. A helical transmembrane segment spans residues 428–457 (FIWWLRCLVINVVLFILLFFLTTPAIIITT). The Extracellular portion of the chain corresponds to 458–472 (MDKFNVTKPVEYLNN). Asn-462 is a glycosylation site (N-linked (GlcNAc...) asparagine). Residues 473–502 (PIITQFFPTLLLWCFSALLPTIVYYSAFFE) form a helical membrane-spanning segment. Residues 503-506 (AHWT) are Cytoplasmic-facing. The chain crosses the membrane as a helical span at residues 507 to 543 (RSGENRTTMHKCYTFLIFMVLLLPSLGLSSLDLFFRW). Over 544–566 (LFDKKFLAEAAIRFECVFLPDNG) the chain is Extracellular. A helical membrane pass occupies residues 567–599 (AFFVNYVIASAFIGNAMDLLRIPGLLMYMIRLC). Residues 567-599 (AFFVNYVIASAFIGNAMDLLRIPGLLMYMIRLC) form a gating helix region. The Cytoplasmic portion of the chain corresponds to 600 to 619 (LARSAAERRNVKRHQAYEFQ). Residues 620–638 (FGAAYAWMMCVFTVVMTYS) form a helical membrane-spanning segment. Residues 639–641 (ITC) are Extracellular-facing. The helical transmembrane segment at 642 to 666 (PIIVPFGLMYMLLKHLVDRYNLYYA) threads the bilayer. Topologically, residues 667–673 (YLPAKLD) are cytoplasmic. The helical transmembrane segment at 674–702 (KKIHSGAVNQVVAAPILCLFWLLFFSTMR) threads the bilayer. At 703–707 (TGFLA) the chain is on the extracellular side. Residues 708 to 728 (PTSMFTFVVLVITIVICLCHV) form a helical membrane-spanning segment. Residues Cys-726 and Cys-729 are each lipidated (S-palmitoyl cysteine). At 729–832 (CFGHFKYLSA…DSLIENEIHQ (104 aa)) the chain is on the cytoplasmic side. The tract at residues 780 to 814 (EVDGDGDGAPGSSGDEPPSSSSQDEELLMPPDALT) is disordered. Low complexity predominate over residues 789–801 (PGSSGDEPPSSSS).

The protein belongs to the CSC1 (TC 1.A.17) family. Monomer. Interacts with SLC19A2; interaction is required for the phospholipid scramblase activity. Palmitoylation is required for localization to the plasma membrane and stability. Post-translationally, N-Glycosylated.

The protein resides in the cell membrane. It localises to the endoplasmic reticulum membrane. Its subcellular location is the lysosome membrane. It is found in the early endosome membrane. The catalysed reaction is Ca(2+)(in) = Ca(2+)(out). The enzyme catalyses Mg(2+)(in) = Mg(2+)(out). It catalyses the reaction K(+)(in) = K(+)(out). It carries out the reaction Na(+)(in) = Na(+)(out). The catalysed reaction is Cs(+)(in) = Cs(+)(out). The enzyme catalyses a 1,2-diacyl-sn-glycero-3-phosphocholine(in) = a 1,2-diacyl-sn-glycero-3-phosphocholine(out). It catalyses the reaction a sphingomyelin(in) = a sphingomyelin(out). Functionally, mechanosensitive cation channel with low conductance and high activation threshold. Osmosensitive cation channel preferentially activated by hypotonic stress. Also acts as a phospholipid scramblase in response to changes in membrane structure: upon changes in membrane curvature and thickness, alters its conformation and translocates phospholipids, such as phosphatidylcholine and sphingomyelin, thereby controlling plasma membrane lipid distribution. Forms a heterodimer with SLC19A2, which mediates phospholipid scramblase activity following Ca(2+) stimulation. Expressed in excitatory neurons of the subfornical organ and functions as a thirst receptor that mediates neuronal response to hyperosmolality to drive thirst and drinking behavior. Facilitates intestinal motility by promoting proliferation of intestinal stem cells. Essential for the baby's first breath and respiration throughout life. Upon lung inflation conducts cation currents in alveolar type 1 and 2 cells triggering lamellar body exocytosis and surfactant secretion into airspace. Acts as an osmosensor in cochlear outer hair cells (OHCs) where it mediates calcium influx and regulatory volume decrease response. Required for the maintenance of OHC morphology, OHC survival and normal hearing. This Homo sapiens (Human) protein is Mechanosensitive cation channel TMEM63B.